The following is a 655-amino-acid chain: Putative calcium up-regulated protein J (655 aa).

Residues 40 to 181 (KSRAMLKGDN…DNVCFQWDLE (142 aa)) form the Ricin B-type lectin domain.

This sequence belongs to the cup family.

This chain is Putative calcium up-regulated protein J (cupJ), found in Dictyostelium discoideum (Social amoeba).